We begin with the raw amino-acid sequence, 556 residues long: Sphingomyelinase C (556 aa).

Residues 1-27 (MRIKKYTKVRLLVNCCLLLFFLIDCGA) form the signal peptide.

It is found in the secreted. It carries out the reaction a sphingomyelin + H2O = phosphocholine + an N-acylsphing-4-enine + H(+). The sequence is that of Sphingomyelinase C (sph) from Leptospira interrogans.